Here is a 603-residue protein sequence, read N- to C-terminus: Arginine--tRNA ligase (603 aa).

A 'HIGH' region motif is present at residues 143–153 (PNIAKEMHVGH).

It belongs to the class-I aminoacyl-tRNA synthetase family. As to quaternary structure, monomer.

The protein localises to the cytoplasm. It carries out the reaction tRNA(Arg) + L-arginine + ATP = L-arginyl-tRNA(Arg) + AMP + diphosphate. In Prochlorococcus marinus (strain MIT 9303), this protein is Arginine--tRNA ligase.